The chain runs to 64 residues: Large ribosomal subunit protein bL35 (64 aa).

A compositionally biased stretch (basic residues) spans 1-15 (MPKNKTHSGASKRFR). The tract at residues 1 to 20 (MPKNKTHSGASKRFRVTGSG) is disordered.

Belongs to the bacterial ribosomal protein bL35 family.

This Nocardioides sp. (strain ATCC BAA-499 / JS614) protein is Large ribosomal subunit protein bL35.